A 91-amino-acid polypeptide reads, in one-letter code: Insertion element IS1 7 protein InsA (91 aa).

Belongs to the IS1 elements InsA family.

Its function is as follows. Absolutely required for transposition of IS1. The sequence is that of Insertion element IS1 7 protein InsA (insA7) from Escherichia coli (strain K12).